A 340-amino-acid polypeptide reads, in one-letter code: Farnesyl pyrophosphate synthase 1 (340 aa).

Isopentenyl diphosphate contacts are provided by Lys47, Arg50, and Gln85. Positions 92 and 96 each coordinate Mg(2+). Arg101 provides a ligand contact to dimethylallyl diphosphate. Residue Arg102 coordinates isopentenyl diphosphate. Positions 188, 189, 227, 244, and 253 each coordinate dimethylallyl diphosphate.

This sequence belongs to the FPP/GGPP synthase family. Mg(2+) serves as cofactor. In terms of tissue distribution, mainly expressed in trichomes and flowers, and, to a lower extent, in leaves, roots and stems.

It localises to the cytoplasm. The protein localises to the nucleus. The enzyme catalyses isopentenyl diphosphate + dimethylallyl diphosphate = (2E)-geranyl diphosphate + diphosphate. It catalyses the reaction isopentenyl diphosphate + (2E)-geranyl diphosphate = (2E,6E)-farnesyl diphosphate + diphosphate. Its pathway is isoprenoid biosynthesis; farnesyl diphosphate biosynthesis; farnesyl diphosphate from geranyl diphosphate and isopentenyl diphosphate: step 1/1. The protein operates within sesquiterpene biosynthesis. It participates in isoprenoid biosynthesis; geranyl diphosphate biosynthesis; geranyl diphosphate from dimethylallyl diphosphate and isopentenyl diphosphate: step 1/1. In terms of biological role, catalyzes the sequential condensation of isopentenyl pyrophosphate with the allylic pyrophosphates, dimethylallyl pyrophosphate, and then with the resultant geranylpyrophosphate to the ultimate product farnesyl pyrophosphate. In Cannabis sativa (Hemp), this protein is Farnesyl pyrophosphate synthase 1.